The following is a 368-amino-acid chain: uncharacterized protein (368 aa).

Residues 237–287 (ESLSIPSRRRPSSIAPIGTRPSRKEIAFSNSSTPTDQTLRPPNPPAANGNA) form a disordered region. Residues 238–253 (SLSIPSRRRPSSIAPI) are compositionally biased toward low complexity. Positions 264–276 (FSNSSTPTDQTLR) are enriched in polar residues.

This is an uncharacterized protein from Schizosaccharomyces pombe (strain 972 / ATCC 24843) (Fission yeast).